We begin with the raw amino-acid sequence, 402 residues long: Phosphoglycerate kinase (402 aa).

Substrate contacts are provided by residues D21 to N23, R36, H59 to R62, R119, and R154. ATP contacts are provided by residues K207, G298, E329, and G356–A359.

The protein belongs to the phosphoglycerate kinase family. As to quaternary structure, monomer.

The protein resides in the cytoplasm. It carries out the reaction (2R)-3-phosphoglycerate + ATP = (2R)-3-phospho-glyceroyl phosphate + ADP. It participates in carbohydrate degradation; glycolysis; pyruvate from D-glyceraldehyde 3-phosphate: step 2/5. In Chlamydia pneumoniae (Chlamydophila pneumoniae), this protein is Phosphoglycerate kinase (pgk).